Consider the following 376-residue polypeptide: Queuine tRNA-ribosyltransferase (376 aa).

Residue aspartate 93 is the Proton acceptor of the active site. Substrate is bound by residues 93-97 (DSGGF), aspartate 147, glutamine 190, and glycine 217. The tract at residues 248–254 (GVGKPDD) is RNA binding. Aspartate 267 serves as the catalytic Nucleophile. Zn(2+) contacts are provided by cysteine 305, cysteine 307, cysteine 310, and histidine 336.

The protein belongs to the queuine tRNA-ribosyltransferase family. As to quaternary structure, homodimer. Within each dimer, one monomer is responsible for RNA recognition and catalysis, while the other monomer binds to the replacement base PreQ1. Zn(2+) serves as cofactor.

The enzyme catalyses 7-aminomethyl-7-carbaguanine + guanosine(34) in tRNA = 7-aminomethyl-7-carbaguanosine(34) in tRNA + guanine. The protein operates within tRNA modification; tRNA-queuosine biosynthesis. Functionally, catalyzes the base-exchange of a guanine (G) residue with the queuine precursor 7-aminomethyl-7-deazaguanine (PreQ1) at position 34 (anticodon wobble position) in tRNAs with GU(N) anticodons (tRNA-Asp, -Asn, -His and -Tyr). Catalysis occurs through a double-displacement mechanism. The nucleophile active site attacks the C1' of nucleotide 34 to detach the guanine base from the RNA, forming a covalent enzyme-RNA intermediate. The proton acceptor active site deprotonates the incoming PreQ1, allowing a nucleophilic attack on the C1' of the ribose to form the product. After dissociation, two additional enzymatic reactions on the tRNA convert PreQ1 to queuine (Q), resulting in the hypermodified nucleoside queuosine (7-(((4,5-cis-dihydroxy-2-cyclopenten-1-yl)amino)methyl)-7-deazaguanosine). This is Queuine tRNA-ribosyltransferase from Cereibacter sphaeroides (strain ATCC 17029 / ATH 2.4.9) (Rhodobacter sphaeroides).